A 353-amino-acid polypeptide reads, in one-letter code: Photosystem II D2 protein (353 aa).

Threonine 2 carries the N-acetylthreonine modification. Phosphothreonine is present on threonine 2. A helical membrane pass occupies residues 41 to 61 (CAYFALGGWFTGTTFVTSWYT). A chlorophyll a-binding site is contributed by histidine 118. A helical transmembrane segment spans residues 125–141 (GFMLRQFELARSVQLRP). Pheophytin a-binding residues include glutamine 130 and asparagine 143. Residues 153 to 166 (VFVSVFLIYPLGQS) form a helical membrane-spanning segment. Chlorophyll a is bound at residue histidine 198. Residues 208–228 (AALLCAIHGATVENTLFEDGD) traverse the membrane as a helical segment. Histidine 215 and phenylalanine 262 together coordinate a plastoquinone. A Fe cation-binding site is contributed by histidine 215. Histidine 269 serves as a coordination point for Fe cation. Residues 279–295 (GLWMSALGVVGLALNLR) form a helical membrane-spanning segment.

The protein belongs to the reaction center PufL/M/PsbA/D family. As to quaternary structure, PSII is composed of 1 copy each of membrane proteins PsbA, PsbB, PsbC, PsbD, PsbE, PsbF, PsbH, PsbI, PsbJ, PsbK, PsbL, PsbM, PsbT, PsbX, PsbY, PsbZ, Psb30/Ycf12, at least 3 peripheral proteins of the oxygen-evolving complex and a large number of cofactors. It forms dimeric complexes. Requires The D1/D2 heterodimer binds P680, chlorophylls that are the primary electron donor of PSII, and subsequent electron acceptors. It shares a non-heme iron and each subunit binds pheophytin, quinone, additional chlorophylls, carotenoids and lipids. There is also a Cl(-1) ion associated with D1 and D2, which is required for oxygen evolution. The PSII complex binds additional chlorophylls, carotenoids and specific lipids. as cofactor.

Its subcellular location is the plastid. The protein resides in the chloroplast thylakoid membrane. The catalysed reaction is 2 a plastoquinone + 4 hnu + 2 H2O = 2 a plastoquinol + O2. Photosystem II (PSII) is a light-driven water:plastoquinone oxidoreductase that uses light energy to abstract electrons from H(2)O, generating O(2) and a proton gradient subsequently used for ATP formation. It consists of a core antenna complex that captures photons, and an electron transfer chain that converts photonic excitation into a charge separation. The D1/D2 (PsbA/PsbD) reaction center heterodimer binds P680, the primary electron donor of PSII as well as several subsequent electron acceptors. D2 is needed for assembly of a stable PSII complex. This Citrus sinensis (Sweet orange) protein is Photosystem II D2 protein.